The following is a 613-amino-acid chain: tRNA 5-methylaminomethyl-2-thiouridine biosynthesis bifunctional protein MnmC (613 aa).

Residues 1 to 225 (MKKAKLIFKD…KREMIKAYLE (225 aa)) form a tRNA (mnm(5)s(2)U34)-methyltransferase region. The segment at 252 to 613 (IGAGISSAVL…FLIRKLKKGL (362 aa)) is FAD-dependent cmnm(5)s(2)U34 oxidoreductase.

It in the N-terminal section; belongs to the methyltransferase superfamily. tRNA (mnm(5)s(2)U34)-methyltransferase family. The protein in the C-terminal section; belongs to the DAO family. The cofactor is FAD.

Its subcellular location is the cytoplasm. It catalyses the reaction 5-aminomethyl-2-thiouridine(34) in tRNA + S-adenosyl-L-methionine = 5-methylaminomethyl-2-thiouridine(34) in tRNA + S-adenosyl-L-homocysteine + H(+). Its function is as follows. Catalyzes the last two steps in the biosynthesis of 5-methylaminomethyl-2-thiouridine (mnm(5)s(2)U) at the wobble position (U34) in tRNA. Catalyzes the FAD-dependent demodification of cmnm(5)s(2)U34 to nm(5)s(2)U34, followed by the transfer of a methyl group from S-adenosyl-L-methionine to nm(5)s(2)U34, to form mnm(5)s(2)U34. This chain is tRNA 5-methylaminomethyl-2-thiouridine biosynthesis bifunctional protein MnmC, found in Campylobacter jejuni (strain RM1221).